The sequence spans 163 residues: E3 ubiquitin-protein ligase ATL23 (163 aa).

Residues 35-55 (ALLLPCVGMCIVFLIYLFLLW) form a helical membrane-spanning segment. Residues 104–146 (CAVCLEDIESGQSTRLVPGCNHGFHQLCADTWLSNHTVCPVCR) form an RING-type; atypical zinc finger.

This sequence belongs to the RING-type zinc finger family. ATL subfamily.

The protein resides in the membrane. It catalyses the reaction S-ubiquitinyl-[E2 ubiquitin-conjugating enzyme]-L-cysteine + [acceptor protein]-L-lysine = [E2 ubiquitin-conjugating enzyme]-L-cysteine + N(6)-ubiquitinyl-[acceptor protein]-L-lysine.. Its pathway is protein modification; protein ubiquitination. Functionally, E3 ubiquitin-protein ligase able to catalyze polyubiquitination with ubiquitin-conjugating enzyme E2 UBC8, UBC10, UBC11, UBC28 and UBC29 in vitro. This is E3 ubiquitin-protein ligase ATL23 (ATL23) from Arabidopsis thaliana (Mouse-ear cress).